Here is a 165-residue protein sequence, read N- to C-terminus: Endoribonuclease YbeY (165 aa).

Zn(2+) is bound by residues H130, H134, and H140.

Belongs to the endoribonuclease YbeY family. Zn(2+) serves as cofactor.

It is found in the cytoplasm. Its function is as follows. Single strand-specific metallo-endoribonuclease involved in late-stage 70S ribosome quality control and in maturation of the 3' terminus of the 16S rRNA. This Streptococcus pyogenes serotype M28 (strain MGAS6180) protein is Endoribonuclease YbeY.